Reading from the N-terminus, the 726-residue chain is Fatty acid oxidation complex subunit alpha (726 aa).

Residues Met1–Ser189 are enoyl-CoA hydratase/isomerase. Asp296 provides a ligand contact to substrate. The 3-hydroxyacyl-CoA dehydrogenase stretch occupies residues Glu311 to Val726. Residues Met324, Asp343, Val400–Glu402, Lys407, and Ser429 each bind NAD(+). His450 acts as the For 3-hydroxyacyl-CoA dehydrogenase activity in catalysis. Asn453 is an NAD(+) binding site. Substrate is bound by residues Asn500 and Tyr660.

This sequence in the N-terminal section; belongs to the enoyl-CoA hydratase/isomerase family. It in the C-terminal section; belongs to the 3-hydroxyacyl-CoA dehydrogenase family. In terms of assembly, heterotetramer of two alpha chains (FadB) and two beta chains (FadA).

It catalyses the reaction a (3S)-3-hydroxyacyl-CoA + NAD(+) = a 3-oxoacyl-CoA + NADH + H(+). The enzyme catalyses a (3S)-3-hydroxyacyl-CoA = a (2E)-enoyl-CoA + H2O. The catalysed reaction is a 4-saturated-(3S)-3-hydroxyacyl-CoA = a (3E)-enoyl-CoA + H2O. It carries out the reaction (3S)-3-hydroxybutanoyl-CoA = (3R)-3-hydroxybutanoyl-CoA. It catalyses the reaction a (3Z)-enoyl-CoA = a 4-saturated (2E)-enoyl-CoA. The enzyme catalyses a (3E)-enoyl-CoA = a 4-saturated (2E)-enoyl-CoA. It participates in lipid metabolism; fatty acid beta-oxidation. Functionally, involved in the aerobic and anaerobic degradation of long-chain fatty acids via beta-oxidation cycle. Catalyzes the formation of 3-oxoacyl-CoA from enoyl-CoA via L-3-hydroxyacyl-CoA. It can also use D-3-hydroxyacyl-CoA and cis-3-enoyl-CoA as substrate. This is Fatty acid oxidation complex subunit alpha from Aliivibrio salmonicida (strain LFI1238) (Vibrio salmonicida (strain LFI1238)).